The primary structure comprises 126 residues: Aspartate 1-decarboxylase (126 aa).

The Schiff-base intermediate with substrate; via pyruvic acid role is filled by serine 25. Pyruvic acid (Ser) is present on serine 25. Threonine 57 contacts substrate. Residue tyrosine 58 is the Proton donor of the active site. Substrate is bound at residue glycine 73–alanine 75.

This sequence belongs to the PanD family. In terms of assembly, heterooctamer of four alpha and four beta subunits. Pyruvate is required as a cofactor. Is synthesized initially as an inactive proenzyme, which is activated by self-cleavage at a specific serine bond to produce a beta-subunit with a hydroxyl group at its C-terminus and an alpha-subunit with a pyruvoyl group at its N-terminus.

The protein localises to the cytoplasm. The catalysed reaction is L-aspartate + H(+) = beta-alanine + CO2. It participates in cofactor biosynthesis; (R)-pantothenate biosynthesis; beta-alanine from L-aspartate: step 1/1. Its function is as follows. Catalyzes the pyruvoyl-dependent decarboxylation of aspartate to produce beta-alanine. The sequence is that of Aspartate 1-decarboxylase from Xanthomonas campestris pv. campestris (strain ATCC 33913 / DSM 3586 / NCPPB 528 / LMG 568 / P 25).